The following is a 347-amino-acid chain: Heat-inducible transcription repressor HrcA (347 aa).

Belongs to the HrcA family.

In terms of biological role, negative regulator of class I heat shock genes (grpE-dnaK-dnaJ and groELS operons). Prevents heat-shock induction of these operons. In Rhodococcus jostii (strain RHA1), this protein is Heat-inducible transcription repressor HrcA.